A 565-amino-acid polypeptide reads, in one-letter code: Sulfite reductase [NADPH] hemoprotein beta-component (565 aa).

Residues Cys429, Cys435, Cys474, and Cys478 each coordinate [4Fe-4S] cluster. Cys478 is a binding site for siroheme.

It belongs to the nitrite and sulfite reductase 4Fe-4S domain family. As to quaternary structure, alpha(8)-beta(8). The alpha component is a flavoprotein, the beta component is a hemoprotein. Siroheme serves as cofactor. It depends on [4Fe-4S] cluster as a cofactor.

The enzyme catalyses hydrogen sulfide + 3 NADP(+) + 3 H2O = sulfite + 3 NADPH + 4 H(+). It functions in the pathway sulfur metabolism; hydrogen sulfide biosynthesis; hydrogen sulfide from sulfite (NADPH route): step 1/1. Its function is as follows. Component of the sulfite reductase complex that catalyzes the 6-electron reduction of sulfite to sulfide. This is one of several activities required for the biosynthesis of L-cysteine from sulfate. The sequence is that of Sulfite reductase [NADPH] hemoprotein beta-component from Shewanella putrefaciens (strain CN-32 / ATCC BAA-453).